A 72-amino-acid polypeptide reads, in one-letter code: NAD(P)H-quinone oxidoreductase subunit O (72 aa).

This sequence belongs to the complex I NdhO subunit family. In terms of assembly, NDH-1 can be composed of about 15 different subunits; different subcomplexes with different compositions have been identified which probably have different functions.

It localises to the cellular thylakoid membrane. The catalysed reaction is a plastoquinone + NADH + (n+1) H(+)(in) = a plastoquinol + NAD(+) + n H(+)(out). The enzyme catalyses a plastoquinone + NADPH + (n+1) H(+)(in) = a plastoquinol + NADP(+) + n H(+)(out). NDH-1 shuttles electrons from an unknown electron donor, via FMN and iron-sulfur (Fe-S) centers, to quinones in the respiratory and/or the photosynthetic chain. The immediate electron acceptor for the enzyme in this species is believed to be plastoquinone. Couples the redox reaction to proton translocation, and thus conserves the redox energy in a proton gradient. Cyanobacterial NDH-1 also plays a role in inorganic carbon-concentration. This Crocosphaera subtropica (strain ATCC 51142 / BH68) (Cyanothece sp. (strain ATCC 51142)) protein is NAD(P)H-quinone oxidoreductase subunit O.